The chain runs to 266 residues: Chymotrypsin-like elastase family member 1 (266 aa).

Positions 1-16 (MLRFLVFASLVLYGHS) are cleaved as a signal peptide. The propeptide at 17 to 26 (TQDFPETNAR) is activation peptide. The region spanning 27-264 (VVGGAEARRN…YISWMNNVIA (238 aa)) is the Peptidase S1 domain. Cysteine 56 and cysteine 72 form a disulfide bridge. Histidine 71 (charge relay system) is an active-site residue. Positions 85, 87, 90, and 95 each coordinate Ca(2+). The active-site Charge relay system is the aspartate 119. Cystine bridges form between cysteine 153–cysteine 220, cysteine 184–cysteine 200, and cysteine 210–cysteine 240. The active-site Charge relay system is serine 214.

The protein belongs to the peptidase S1 family. Elastase subfamily. Requires Ca(2+) as cofactor. In terms of tissue distribution, pancreas.

Its subcellular location is the secreted. It carries out the reaction Hydrolysis of proteins, including elastin. Preferential cleavage: Ala-|-Xaa.. Its function is as follows. Serine proteases that hydrolyze many proteins in addition to elastin. The chain is Chymotrypsin-like elastase family member 1 (Cela1) from Rattus norvegicus (Rat).